A 527-amino-acid polypeptide reads, in one-letter code: uncharacterized protein (527 aa).

The 93-residue stretch at 1–93 (MSYMIAVPDM…AGAYASAEAT (93 aa)) folds into the PE domain. 3 stretches are compositionally biased toward gly residues: residues 264 to 286 (IHGH…GVQG), 292 to 384 (GAAG…AGNG), and 472 to 515 (NGGD…GGSR). Disordered regions lie at residues 264–384 (IHGH…AGNG) and 472–527 (NGGD…TPGQ).

It belongs to the mycobacterial PE family. PGRS subfamily.

This is an uncharacterized protein from Mycobacterium tuberculosis (strain CDC 1551 / Oshkosh).